The sequence spans 325 residues: Inactive S-adenosylmethionine decarboxylase prozyme (325 aa).

Belongs to the eukaryotic AdoMetDC family. As to quaternary structure, forms a heterodimer with S-adenosylmethionine decarboxylase AdoMetDC; heterodimerization is required to activate AdoMetDC.

It functions in the pathway amine and polyamine biosynthesis; S-adenosylmethioninamine biosynthesis; S-adenosylmethioninamine from S-adenosyl-L-methionine: step 1/1. Probably has no catalytic activity due to the loss of several residues required for processing and catalysis. Forms a complex with S-adenosylmethionine decarboxylase AdoMetDC which is essential to activate AdoMetDC. Required for the biosynthesis of the polyamine spermidine. Required for growth and survival during the bloodstream life cycle stage. In Trypanosoma brucei brucei, this protein is Inactive S-adenosylmethionine decarboxylase prozyme.